A 147-amino-acid polypeptide reads, in one-letter code: Hemoglobin subunit delta (147 aa).

One can recognise a Globin domain in the interval 3–147; the sequence is HLTGEEKAAV…VANALAHKYH (145 aa). Residues His64 and His93 each contribute to the heme b site.

It belongs to the globin family. In terms of assembly, heterotetramer of two delta chains and two alpha chains. In terms of tissue distribution, red blood cells.

This Ailuropoda melanoleuca (Giant panda) protein is Hemoglobin subunit delta (HBD).